The chain runs to 228 residues: Triosephosphate isomerase (228 aa).

11-13 (NFK) is a binding site for substrate. Catalysis depends on His95, which acts as the Electrophile. Glu143 acts as the Proton acceptor in catalysis. Substrate is bound by residues Ile148, Gly183, and 204–205 (AS).

It belongs to the triosephosphate isomerase family. As to quaternary structure, homotetramer; dimer of dimers.

It is found in the cytoplasm. The catalysed reaction is D-glyceraldehyde 3-phosphate = dihydroxyacetone phosphate. It participates in carbohydrate biosynthesis; gluconeogenesis. Its pathway is carbohydrate degradation; glycolysis; D-glyceraldehyde 3-phosphate from glycerone phosphate: step 1/1. Functionally, involved in the gluconeogenesis. Catalyzes stereospecifically the conversion of dihydroxyacetone phosphate (DHAP) to D-glyceraldehyde-3-phosphate (G3P). The polypeptide is Triosephosphate isomerase (Pyrococcus abyssi (strain GE5 / Orsay)).